A 731-amino-acid polypeptide reads, in one-letter code: Anaphase-promoting complex subunit 2 (731 aa).

It belongs to the cullin family. As to quaternary structure, the APC/C is probably composed of at least 12 subunits: apc-2, apc-10, apc-11, cdc-26, emb-1, emb-27, emb-30, mat-1, mat-2, mat-3, such-1 and gfi-3.

It participates in protein modification; protein ubiquitination. Its function is as follows. Probable component of the anaphase promoting complex/cyclosome (APC/C), a cell cycle-regulated ubiquitin ligase that controls progression through mitosis and the G1 phase of the cell cycle. The APC/C complex acts by mediating ubiquitination and subsequent degradation of target proteins. Developmental role in early embryogenesis and the metaphase to anaphase transition in meiosis and mitosis. This chain is Anaphase-promoting complex subunit 2, found in Caenorhabditis elegans.